Here is a 419-residue protein sequence, read N- to C-terminus: UPF0229 protein TERTU_3150 (419 aa).

Positions 63-111 (IFHHGSGGKNNRVLPGNDRFNGGDHIERPEQGQGGGGNGSGASDSGEGE) are disordered. Over residues 83–92 (NGGDHIERPE) the composition is skewed to basic and acidic residues.

This sequence belongs to the UPF0229 family.

This is UPF0229 protein TERTU_3150 from Teredinibacter turnerae (strain ATCC 39867 / T7901).